The sequence spans 458 residues: Transcription factor bHLH10 (458 aa).

Residues 1–49 are disordered; the sequence is MEEERESLYEEMGCFDPNTPAEVTVESSFSQAEPPPPPPQVLVAGSTSN. Positions 243 to 292 constitute a bHLH domain; the sequence is SRKSRTSPTERERRVHFNDRFFDLKNLIPNPTKIDRASIVGEAIDYIKEL. The segment at 315–338 is disordered; it reads KRARVGEGGGGEDQEEEEDTVNYK. The span at 324–334 shows a compositional bias: acidic residues; it reads GGEDQEEEEDT.

Homodimer.

The protein localises to the nucleus. The chain is Transcription factor bHLH10 (BHLH10) from Arabidopsis thaliana (Mouse-ear cress).